Here is a 269-residue protein sequence, read N- to C-terminus: Protein RKD1 (269 aa).

The RWP-RK domain occupies 106–195 (TTTTKKRRCR…EKMEGEENED (90 aa)). The stretch at 175 to 216 (LQKLISNVKELEKMEGEENEDKLRNALEKLEKEKKTIEKLPD) forms a coiled coil. The segment at 230 to 269 (CFKANHKRKRRSGMSTPITSSSSSASASSSSYSSVSGFER) is disordered. A compositionally biased stretch (low complexity) spans 249-269 (SSSSSASASSSSYSSVSGFER).

It is found in the nucleus. Putative transcription factor. In Arabidopsis thaliana (Mouse-ear cress), this protein is Protein RKD1 (RKD1).